The primary structure comprises 1097 residues: Apolipoprotein B receptor (1097 aa).

5 disordered regions span residues 64–249 (QEDL…KGEE), 262–376 (AWGT…WTTS), 410–739 (EEEG…SRRG), 789–866 (GWDS…ARAE), and 889–1097 (VGWQ…PKPQ). Basic and acidic residues-rich tracts occupy residues 83–92 (GPGDDRRHEV), 158–177 (ERQE…RSWE), and 185–208 (VRAR…ETEG). The span at 209–218 (KAGAVGPKAA) shows a compositional bias: low complexity. Basic and acidic residues-rich tracts occupy residues 219 to 232 (GDNR…READ) and 279 to 302 (GREE…EEAR). The segment covering 312 to 330 (TASGGEEAETASGGEEAGT) has biased composition (low complexity). The segment covering 331 to 362 (ASGGEEAGIASGGEAGTASGGEEAGTASGGEE) has biased composition (gly residues). Serine 458 carries the post-translational modification Phosphoserine. Basic and acidic residues-rich tracts occupy residues 463–487 (VDLR…RMEE) and 496–505 (EERGSSRDPV). Phosphoserine is present on serine 510. A Phosphothreonine modification is found at threonine 572. Position 594 is a phosphoserine (serine 594). Composition is skewed to basic and acidic residues over residues 594 to 606 (SKEE…EAGP) and 626 to 637 (NRTRKDMERGNT). Positions 640 to 652 (DAADGEQREEEET) are enriched in acidic residues. Composition is skewed to basic and acidic residues over residues 791-800 (DSKEKEEAAA), 892-918 (QERE…RLLD), and 928-950 (RRAE…EEQP). Basic residues predominate over residues 1000–1017 (SRVHLSRSSSQRRSRPSF). A compositionally biased stretch (low complexity) spans 1041–1050 (APEQRPLQLE).

Homodimer. Post-translationally, there are 2 forms in macrophages, the membrane-binding proteins 200 kDa (MBP 200) and 235 kDa (MBP 235), that can be reduced into a single active ligand-binding species with intermediate mobility (MBP 200R). In terms of tissue distribution, expressed in peripheral blood leukocytes &gt; bone marrow = spleen &gt; lymph node, and only faintly visible in appendix and thymus. Expressed in the brain, heart, kidney, liver, lung, pancreas, and placenta. Expressed primarily by reticuloendothelial cells: monocytes, macrophages, and endothelial cells. Expressed in atherosclerotic lesion foam cells.

Its subcellular location is the cell membrane. Its function is as follows. Macrophage receptor that binds to the apolipoprotein B48 (APOB) of dietary triglyceride (TG)-rich lipoproteins (TRL) or to a like domain of APOB in hypertriglyceridemic very low density lipoprotein (HTG-VLDL). Binds and internalizes TRL when out of the context of the macrophage. May provide essential lipids to reticuloendothelial cells. Could also be involved in foam cell formation with elevated TRL and remnant lipoprotein (RLP). Mediates the rapid high-affinity uptake of chylomicrons (CM), HTG-VLDL, and trypsinized (tryp) VLDL devoid of APOE in vitro in macrophages. This is Apolipoprotein B receptor from Homo sapiens (Human).